Here is a 96-residue protein sequence, read N- to C-terminus: MNIRPLHDKLIVERLEVENKSEGGIVLTSQSVKKSNRGKVVAVGLGRPLKNGDRARMEVKTGDQIIFNDGYGVKTEKVDGKEYLILSESDVLAIVE.

The protein belongs to the GroES chaperonin family. Heptamer of 7 subunits arranged in a ring. Interacts with the chaperonin GroEL.

Its subcellular location is the cytoplasm. In terms of biological role, together with the chaperonin GroEL, plays an essential role in assisting protein folding. The GroEL-GroES system forms a nano-cage that allows encapsulation of the non-native substrate proteins and provides a physical environment optimized to promote and accelerate protein folding. GroES binds to the apical surface of the GroEL ring, thereby capping the opening of the GroEL channel. The chain is Co-chaperonin GroES 2 from Vibrio cholerae serotype O1 (strain ATCC 39315 / El Tor Inaba N16961).